The sequence spans 478 residues: Ribulose bisphosphate carboxylase large chain (478 aa).

The propeptide occupies 1-2 (MS). The residue at position 3 (Pro3) is an N-acetylproline. At Lys14 the chain carries N6,N6,N6-trimethyllysine. 2 residues coordinate substrate: Asn123 and Thr173. The Proton acceptor role is filled by Lys175. A substrate-binding site is contributed by Lys177. Mg(2+) contacts are provided by Lys201, Asp203, and Glu204. Lys201 bears the N6-carboxylysine mark. His294 serves as the catalytic Proton acceptor. Arg295, His327, and Ser379 together coordinate substrate.

The protein belongs to the RuBisCO large chain family. Type I subfamily. Heterohexadecamer of 8 large chains and 8 small chains; disulfide-linked. The disulfide link is formed within the large subunit homodimers. Requires Mg(2+) as cofactor. The disulfide bond which can form in the large chain dimeric partners within the hexadecamer appears to be associated with oxidative stress and protein turnover.

The protein localises to the plastid. It localises to the chloroplast. It catalyses the reaction 2 (2R)-3-phosphoglycerate + 2 H(+) = D-ribulose 1,5-bisphosphate + CO2 + H2O. The catalysed reaction is D-ribulose 1,5-bisphosphate + O2 = 2-phosphoglycolate + (2R)-3-phosphoglycerate + 2 H(+). In terms of biological role, ruBisCO catalyzes two reactions: the carboxylation of D-ribulose 1,5-bisphosphate, the primary event in carbon dioxide fixation, as well as the oxidative fragmentation of the pentose substrate in the photorespiration process. Both reactions occur simultaneously and in competition at the same active site. This Drimys granadensis protein is Ribulose bisphosphate carboxylase large chain.